Consider the following 332-residue polypeptide: Heat-inducible transcription repressor HrcA (332 aa).

Belongs to the HrcA family.

Negative regulator of class I heat shock genes (grpE-dnaK-dnaJ and groELS operons). Prevents heat-shock induction of these operons. In Mycoplasma mobile (strain ATCC 43663 / 163K / NCTC 11711) (Mesomycoplasma mobile), this protein is Heat-inducible transcription repressor HrcA.